The chain runs to 230 residues: Cytidylate kinase (230 aa).

Position 12–20 (12–20 (GPSGAGKGT)) interacts with ATP.

It belongs to the cytidylate kinase family. Type 1 subfamily.

The protein resides in the cytoplasm. It catalyses the reaction CMP + ATP = CDP + ADP. The enzyme catalyses dCMP + ATP = dCDP + ADP. In Shewanella putrefaciens (strain CN-32 / ATCC BAA-453), this protein is Cytidylate kinase.